A 630-amino-acid chain; its full sequence is Chaperone protein DnaK (630 aa).

A Phosphothreonine; by autocatalysis modification is found at Thr198. The tract at residues 604–630 (AAAAPGEEAPKDDDVVDAEFSEVDDKK) is disordered. Acidic residues predominate over residues 617–630 (DVVDAEFSEVDDKK).

The protein belongs to the heat shock protein 70 family.

In terms of biological role, acts as a chaperone. The sequence is that of Chaperone protein DnaK from Rhizorhabdus wittichii (strain DSM 6014 / CCUG 31198 / JCM 15750 / NBRC 105917 / EY 4224 / RW1) (Sphingomonas wittichii).